Here is a 483-residue protein sequence, read N- to C-terminus: Probable cytosol aminopeptidase (483 aa).

Residues K252 and D257 each contribute to the Mn(2+) site. K264 is a catalytic residue. Mn(2+) contacts are provided by D275, D334, and E336. Residue R338 is part of the active site.

The protein belongs to the peptidase M17 family. Requires Mn(2+) as cofactor.

The protein localises to the cytoplasm. It catalyses the reaction Release of an N-terminal amino acid, Xaa-|-Yaa-, in which Xaa is preferably Leu, but may be other amino acids including Pro although not Arg or Lys, and Yaa may be Pro. Amino acid amides and methyl esters are also readily hydrolyzed, but rates on arylamides are exceedingly low.. The catalysed reaction is Release of an N-terminal amino acid, preferentially leucine, but not glutamic or aspartic acids.. In terms of biological role, presumably involved in the processing and regular turnover of intracellular proteins. Catalyzes the removal of unsubstituted N-terminal amino acids from various peptides. The protein is Probable cytosol aminopeptidase of Legionella pneumophila (strain Corby).